Reading from the N-terminus, the 599-residue chain is DNA primase (599 aa).

The segment at 38–62 (CPFHQEKTPSFTVSDSKRFFYCFGC) adopts a CHC2-type zinc-finger fold. In terms of domain architecture, Toprim spans 250 to 332 (NYSILVEGYF…EKKISFIRLP (83 aa)). Residues Glu256, Asp300, and Asp302 each coordinate Mg(2+).

Belongs to the DnaG primase family. Monomer. Interacts with DnaB. It depends on Zn(2+) as a cofactor. The cofactor is Mg(2+).

It catalyses the reaction ssDNA + n NTP = ssDNA/pppN(pN)n-1 hybrid + (n-1) diphosphate.. In terms of biological role, RNA polymerase that catalyzes the synthesis of short RNA molecules used as primers for DNA polymerase during DNA replication. The sequence is that of DNA primase from Rickettsia bellii (strain RML369-C).